Here is a 435-residue protein sequence, read N- to C-terminus: Methylenetetrahydrofolate--tRNA-(uracil-5-)-methyltransferase TrmFO (435 aa).

FAD is bound at residue Gly10–Gly15.

The protein belongs to the MnmG family. TrmFO subfamily. The cofactor is FAD.

The protein localises to the cytoplasm. It catalyses the reaction uridine(54) in tRNA + (6R)-5,10-methylene-5,6,7,8-tetrahydrofolate + NADH + H(+) = 5-methyluridine(54) in tRNA + (6S)-5,6,7,8-tetrahydrofolate + NAD(+). It carries out the reaction uridine(54) in tRNA + (6R)-5,10-methylene-5,6,7,8-tetrahydrofolate + NADPH + H(+) = 5-methyluridine(54) in tRNA + (6S)-5,6,7,8-tetrahydrofolate + NADP(+). In terms of biological role, catalyzes the folate-dependent formation of 5-methyl-uridine at position 54 (M-5-U54) in all tRNAs. The sequence is that of Methylenetetrahydrofolate--tRNA-(uracil-5-)-methyltransferase TrmFO from Bacillus velezensis (strain DSM 23117 / BGSC 10A6 / LMG 26770 / FZB42) (Bacillus amyloliquefaciens subsp. plantarum).